The chain runs to 188 residues: Elongation factor P (188 aa).

It belongs to the elongation factor P family.

The protein resides in the cytoplasm. The protein operates within protein biosynthesis; polypeptide chain elongation. In terms of biological role, involved in peptide bond synthesis. Stimulates efficient translation and peptide-bond synthesis on native or reconstituted 70S ribosomes in vitro. Probably functions indirectly by altering the affinity of the ribosome for aminoacyl-tRNA, thus increasing their reactivity as acceptors for peptidyl transferase. This is Elongation factor P from Aeromonas hydrophila subsp. hydrophila (strain ATCC 7966 / DSM 30187 / BCRC 13018 / CCUG 14551 / JCM 1027 / KCTC 2358 / NCIMB 9240 / NCTC 8049).